The chain runs to 677 residues: MSDRAEDPAARAAQLREQLEYHAHRYYVLDAPEIPDAEYDRLFTELQALEAAHPGLRTPDSPTQRVIGAVLEGLSAVRHAVPMLSIKTETDTTPTGALKFDAAVRNALKLPPDAPPLRYAAELKFDGLAINLRYQAGRLVQAATRGDGETGEDVTHTVGTIESVPKQLRGITAPVLEVRGEVFMRRDDFEALNERQREAGLKTFVNPRNAAAGIVRQLDASIARQRPLSFFAYGLGDVQGWDVPPTHAGLLDALAALGLPVDAHRTVVEGGEALAAFHAGIAAERDALPFDIDGVVYKVDERALQQQLGFKSREPRWAVAHKYPAQEQSTQLAGIEIQVGRTGKLTPVAKLQPVFVGGTTVSNATLHNRFELRRKGIRIGDTVIVRRAGDVIPEVVGRVPVPRTAYIPNFRMPRACPVCGSQALRERGSVDYRCSGGLFCAAQRKQALLHFAGRRMMDIEGLGDKLVEQLVDGGIIRTLPELYRLGVAKLVALERMGDKSAANLVAALEASKATTLARFLFSLGIRHIGEATAKDLARHFGALDRVMDASVEQLLEVNDVGPVVAQSLRTFFDQPHNREVVEQLRAAGVHWDEHSGEADLTPRPLAGKTFVLTGTLPSLGREAAKELIEAAGGKVAGSVSKKTDYVVAGEEAGSKLEKAQALGVAVIDEAALRALLD.

NAD(+)-binding positions include 36 to 40, 85 to 86, and Glu-122; these read DAEYD and SI. Lys-124 acts as the N6-AMP-lysine intermediate in catalysis. Residues Arg-145, Glu-181, Lys-298, and Lys-322 each coordinate NAD(+). Residues Cys-416, Cys-419, Cys-434, and Cys-440 each coordinate Zn(2+). Residues 600-677 form the BRCT domain; the sequence is LTPRPLAGKT…DEAALRALLD (78 aa).

This sequence belongs to the NAD-dependent DNA ligase family. LigA subfamily. The cofactor is Mg(2+). Requires Mn(2+) as cofactor.

It catalyses the reaction NAD(+) + (deoxyribonucleotide)n-3'-hydroxyl + 5'-phospho-(deoxyribonucleotide)m = (deoxyribonucleotide)n+m + AMP + beta-nicotinamide D-nucleotide.. Its function is as follows. DNA ligase that catalyzes the formation of phosphodiester linkages between 5'-phosphoryl and 3'-hydroxyl groups in double-stranded DNA using NAD as a coenzyme and as the energy source for the reaction. It is essential for DNA replication and repair of damaged DNA. This is DNA ligase from Methylibium petroleiphilum (strain ATCC BAA-1232 / LMG 22953 / PM1).